We begin with the raw amino-acid sequence, 338 residues long: Anthranilate phosphoribosyltransferase (338 aa).

5-phospho-alpha-D-ribose 1-diphosphate is bound by residues Gly-81, 84–85 (GD), Thr-89, 91–94 (NIST), 109–117 (KHGNRSMVS), and Ser-121. Gly-81 serves as a coordination point for anthranilate. Ser-93 contacts Mg(2+). Asn-112 contacts anthranilate. Residue Arg-167 participates in anthranilate binding. Mg(2+) contacts are provided by Asp-226 and Glu-227.

Belongs to the anthranilate phosphoribosyltransferase family. In terms of assembly, homodimer. It depends on Mg(2+) as a cofactor.

The enzyme catalyses N-(5-phospho-beta-D-ribosyl)anthranilate + diphosphate = 5-phospho-alpha-D-ribose 1-diphosphate + anthranilate. It functions in the pathway amino-acid biosynthesis; L-tryptophan biosynthesis; L-tryptophan from chorismate: step 2/5. Functionally, catalyzes the transfer of the phosphoribosyl group of 5-phosphorylribose-1-pyrophosphate (PRPP) to anthranilate to yield N-(5'-phosphoribosyl)-anthranilate (PRA). In Acidithiobacillus ferrooxidans (strain ATCC 23270 / DSM 14882 / CIP 104768 / NCIMB 8455) (Ferrobacillus ferrooxidans (strain ATCC 23270)), this protein is Anthranilate phosphoribosyltransferase.